Reading from the N-terminus, the 420-residue chain is UDP-N-acetyl-D-mannosamine dehydrogenase (420 aa).

Y13, I14, D33, T85, and T126 together coordinate NAD(+). UDP-N-acetyl-alpha-D-mannosaminouronate contacts are provided by R160, V161, K212, N216, R219, H250, R252, and G263. K212 (proton donor/acceptor) is an active-site residue. C266 acts as the Nucleophile in catalysis. Positions 330 and 331 each coordinate UDP-N-acetyl-alpha-D-mannosaminouronate. R338 is an NAD(+) binding site. K416 is a UDP-N-acetyl-alpha-D-mannosaminouronate binding site.

This sequence belongs to the UDP-glucose/GDP-mannose dehydrogenase family. WecC subfamily. In terms of assembly, homodimer.

It catalyses the reaction UDP-N-acetyl-alpha-D-mannosamine + 2 NAD(+) + H2O = UDP-N-acetyl-alpha-D-mannosaminouronate + 2 NADH + 3 H(+). It functions in the pathway bacterial outer membrane biogenesis; enterobacterial common antigen biosynthesis. Catalyzes the four-electron oxidation of UDP-N-acetyl-D-mannosamine (UDP-ManNAc), reducing NAD(+) and releasing UDP-N-acetylmannosaminuronic acid (UDP-ManNAcA). The sequence is that of UDP-N-acetyl-D-mannosamine dehydrogenase from Yersinia pestis.